Reading from the N-terminus, the 280-residue chain is MSEKFDCHYCRDPLQGKKYVQKDGRHCCLKCFDKFCANTCVECRKPISADAKEVHYKNRYWHDTCFRCAKCLHPLASETFVSKDGKILCNKCATREDSPRCKGCFKAIVAGDQNVEYKGTIWHKDCFTCSNCKQVIGTGSFFPKGEDFYCVTCHETKFAKHCVKCNKAITSGGITYQDQPWHAECFVCVTCSKKLAGQRFTAVEDQYYCVDCYKNFVAKKCAGCKNPITGFGKGSSVVAYEGQSWHDYCFHCKKCSVNLANKRFVFHNEQVYCPDCAKKL.

N-acetylserine is present on serine 2. Lysine 4 is subject to N6-acetyllysine. Residues 7-31 (CHYCRDPLQGKKYVQKDGRHCCLKC) form a C4-type zinc finger. 4 consecutive LIM zinc-binding domains span residues 40–92 (CVEC…CNKC), 101–153 (CKGC…CVTC), 162–212 (CVKC…CVDC), and 221–276 (CAGC…CPDC). Lysine 86 participates in a covalent cross-link: Glycyl lysine isopeptide (Lys-Gly) (interchain with G-Cter in SUMO2).

It is found in the cytoplasm. May have an involvement in muscle development or hypertrophy. Isoform 2 binds to RBP-J and plays a negative regulatory role in the RBP-J-mediated transcription in mammalian systems. This chain is Four and a half LIM domains protein 1 (Fhl1), found in Rattus norvegicus (Rat).